The chain runs to 269 residues: 1-(5-phosphoribosyl)-5-[(5-phosphoribosylamino)methylideneamino] imidazole-4-carboxamide isomerase (269 aa).

Asp-10 (proton acceptor) is an active-site residue. The active-site Proton donor is the Asp-132.

It belongs to the HisA/HisF family.

The protein localises to the cytoplasm. It carries out the reaction 1-(5-phospho-beta-D-ribosyl)-5-[(5-phospho-beta-D-ribosylamino)methylideneamino]imidazole-4-carboxamide = 5-[(5-phospho-1-deoxy-D-ribulos-1-ylimino)methylamino]-1-(5-phospho-beta-D-ribosyl)imidazole-4-carboxamide. It functions in the pathway amino-acid biosynthesis; L-histidine biosynthesis; L-histidine from 5-phospho-alpha-D-ribose 1-diphosphate: step 4/9. The chain is 1-(5-phosphoribosyl)-5-[(5-phosphoribosylamino)methylideneamino] imidazole-4-carboxamide isomerase from Xylella fastidiosa (strain M12).